A 228-amino-acid polypeptide reads, in one-letter code: 3-oxoadipate CoA-transferase subunit A (228 aa).

25–31 is a binding site for CoA; it reads GGFGTAG.

It belongs to the 3-oxoacid CoA-transferase subunit A family. As to quaternary structure, heterodimer.

The enzyme catalyses 3-oxoadipate + succinyl-CoA = 3-oxoadipyl-CoA + succinate. It functions in the pathway aromatic compound metabolism; beta-ketoadipate pathway; acetyl-CoA and succinyl-CoA from 3-oxoadipate: step 1/2. This is 3-oxoadipate CoA-transferase subunit A (pcaI) from Acinetobacter baylyi (strain ATCC 33305 / BD413 / ADP1).